Consider the following 162-residue polypeptide: Lectin BRA-3 (162 aa).

A signal peptide spans 1–24 (MQRSEIVQAVTLLVVVFAITTAEC). In terms of domain architecture, C-type lectin spans 25-152 (TCPGNLDWQE…NKNKNFLCKM (128 aa)). Intrachain disulfides connect cysteine 26–cysteine 39, cysteine 56–cysteine 150, and cysteine 125–cysteine 142.

Homotetramer; disulfide-linked. Coelemic fluid.

In terms of biological role, sugar-binding protein which recognizes specific carbohydrate structures and agglutinates a variety of animal cells by binding to cell-surface glycoproteins and glycolipids. Calcium-dependent lectin. Invertebrate lectins may be involved in defense functions. This chain is Lectin BRA-3, found in Megabalanus rosa (Acorn barnacle).